The primary structure comprises 398 residues: Argininosuccinate synthase (398 aa).

9–17 (AYSGGLDTS) contributes to the ATP binding site. Tyrosine 87 and serine 92 together coordinate L-citrulline. Glycine 117 lines the ATP pocket. L-aspartate is bound by residues threonine 119, asparagine 123, and aspartate 124. Residue asparagine 123 coordinates L-citrulline. Arginine 127, serine 176, serine 185, glutamate 261, and tyrosine 273 together coordinate L-citrulline.

This sequence belongs to the argininosuccinate synthase family. Type 1 subfamily. In terms of assembly, homotetramer.

The protein resides in the cytoplasm. The catalysed reaction is L-citrulline + L-aspartate + ATP = 2-(N(omega)-L-arginino)succinate + AMP + diphosphate + H(+). Its pathway is amino-acid biosynthesis; L-arginine biosynthesis; L-arginine from L-ornithine and carbamoyl phosphate: step 2/3. The chain is Argininosuccinate synthase from Clostridium tetani (strain Massachusetts / E88).